Reading from the N-terminus, the 313-residue chain is Putative S-adenosyl-L-methionine-dependent methyltransferase MMAR_0955 (313 aa).

Residues D132 and 161–162 (DL) contribute to the S-adenosyl-L-methionine site.

It belongs to the UPF0677 family.

Its function is as follows. Exhibits S-adenosyl-L-methionine-dependent methyltransferase activity. The sequence is that of Putative S-adenosyl-L-methionine-dependent methyltransferase MMAR_0955 from Mycobacterium marinum (strain ATCC BAA-535 / M).